The primary structure comprises 222 residues: Cytidylate kinase (222 aa).

Position 12–20 (12–20 (GPSGAGKGT)) interacts with ATP.

Belongs to the cytidylate kinase family. Type 1 subfamily.

Its subcellular location is the cytoplasm. The enzyme catalyses CMP + ATP = CDP + ADP. It catalyses the reaction dCMP + ATP = dCDP + ADP. In Methylococcus capsulatus (strain ATCC 33009 / NCIMB 11132 / Bath), this protein is Cytidylate kinase.